Here is a 273-residue protein sequence, read N- to C-terminus: 4-hydroxy-tetrahydrodipicolinate reductase (273 aa).

Residues 12 to 17 and glutamate 38 each bind NAD(+); that span reads GAGGRM. NADP(+) is bound at residue arginine 39. NAD(+) is bound by residues 102–104 and 126–129; these read GTT and AANF. The Proton donor/acceptor role is filled by histidine 159. Histidine 160 contacts (S)-2,3,4,5-tetrahydrodipicolinate. Lysine 163 serves as the catalytic Proton donor. 169-170 serves as a coordination point for (S)-2,3,4,5-tetrahydrodipicolinate; that stretch reads GT.

The protein belongs to the DapB family. Homotetramer.

It is found in the cytoplasm. The catalysed reaction is (S)-2,3,4,5-tetrahydrodipicolinate + NAD(+) + H2O = (2S,4S)-4-hydroxy-2,3,4,5-tetrahydrodipicolinate + NADH + H(+). It catalyses the reaction (S)-2,3,4,5-tetrahydrodipicolinate + NADP(+) + H2O = (2S,4S)-4-hydroxy-2,3,4,5-tetrahydrodipicolinate + NADPH + H(+). Its pathway is amino-acid biosynthesis; L-lysine biosynthesis via DAP pathway; (S)-tetrahydrodipicolinate from L-aspartate: step 4/4. Functionally, catalyzes the conversion of 4-hydroxy-tetrahydrodipicolinate (HTPA) to tetrahydrodipicolinate. The sequence is that of 4-hydroxy-tetrahydrodipicolinate reductase from Pectobacterium carotovorum subsp. carotovorum (strain PC1).